A 520-amino-acid polypeptide reads, in one-letter code: Cytochrome P450 monooxygenase 98 (520 aa).

Residues 7 to 27 form a helical membrane-spanning segment; that stretch reads MLNNNLLIVIGTFAVCVYIVL. Cys-445 provides a ligand contact to heme.

It belongs to the cytochrome P450 family. Heme serves as cofactor.

The protein localises to the membrane. The protein operates within secondary metabolite biosynthesis. Cytochrome P450 monooxygenase that is able to use pyrene, phenanthrene, 3,5-dimethoxy-trans-stilbene and 3,5,4'-trimethoxy-trans-stilbene as substrates for oxidation. In Postia placenta (strain ATCC 44394 / Madison 698-R) (Brown rot fungus), this protein is Cytochrome P450 monooxygenase 98.